The sequence spans 630 residues: Molybdenum cofactor biosynthesis protein 1 (630 aa).

The region spanning 61 to 298 is the Radical SAM core domain; sequence RFNRHHTYLR…SKTYHVPGFK (238 aa). R70 serves as a coordination point for GTP. Positions 77 and 81 each coordinate [4Fe-4S] cluster. Y83 is a binding site for S-adenosyl-L-methionine. Position 84 (C84) interacts with [4Fe-4S] cluster. R120 is a GTP binding site. G124 is an S-adenosyl-L-methionine binding site. A GTP-binding site is contributed by T151. S175 is a binding site for S-adenosyl-L-methionine. K212 is a GTP binding site. An S-adenosyl-L-methionine-binding site is contributed by M246. [4Fe-4S] cluster contacts are provided by C312 and C315. A GTP-binding site is contributed by 317–319; the sequence is RLR. C329 provides a ligand contact to [4Fe-4S] cluster. Residues 402–629 are molybdenum cofactor biosynthesis protein C; it reads KEVKNYLLKL…GGKSSSPQIT (228 aa). D599 functions as the For molybdenum cofactor biosynthesis protein C activity in the catalytic mechanism.

This sequence in the C-terminal section; belongs to the MoaC family. The protein in the N-terminal section; belongs to the radical SAM superfamily. MoaA family. As to quaternary structure, isoform mocs1a and isoform mocs1b probably form a heterooligomer. The cofactor is [4Fe-4S] cluster.

It catalyses the reaction GTP + AH2 + S-adenosyl-L-methionine = (8S)-3',8-cyclo-7,8-dihydroguanosine 5'-triphosphate + 5'-deoxyadenosine + L-methionine + A + H(+). The catalysed reaction is (8S)-3',8-cyclo-7,8-dihydroguanosine 5'-triphosphate = cyclic pyranopterin phosphate + diphosphate. The protein operates within cofactor biosynthesis; molybdopterin biosynthesis. In terms of biological role, isoform mocs1a and isoform mocs1b probably form a complex that catalyzes the conversion of 5'-GTP to cyclic pyranopterin monophosphate (cPMP). mocs1a catalyzes the cyclization of GTP to (8S)-3',8-cyclo-7,8-dihydroguanosine 5'-triphosphate and mocs1b catalyzes the subsequent conversion of (8S)-3',8-cyclo-7,8-dihydroguanosine 5'-triphosphate to cPMP. In Dictyostelium discoideum (Social amoeba), this protein is Molybdenum cofactor biosynthesis protein 1 (mocs1).